Here is a 356-residue protein sequence, read N- to C-terminus: Histidinol-phosphate aminotransferase (356 aa).

The residue at position 214 (Lys-214) is an N6-(pyridoxal phosphate)lysine.

It belongs to the class-II pyridoxal-phosphate-dependent aminotransferase family. Histidinol-phosphate aminotransferase subfamily. In terms of assembly, homodimer. The cofactor is pyridoxal 5'-phosphate.

The catalysed reaction is L-histidinol phosphate + 2-oxoglutarate = 3-(imidazol-4-yl)-2-oxopropyl phosphate + L-glutamate. It participates in amino-acid biosynthesis; L-histidine biosynthesis; L-histidine from 5-phospho-alpha-D-ribose 1-diphosphate: step 7/9. The chain is Histidinol-phosphate aminotransferase from Shigella boydii serotype 18 (strain CDC 3083-94 / BS512).